Reading from the N-terminus, the 303-residue chain is Bifunctional protein FolD (303 aa).

NADP(+)-binding positions include 169–171, T196, and V237; that span reads GRG.

This sequence belongs to the tetrahydrofolate dehydrogenase/cyclohydrolase family. In terms of assembly, homodimer.

The catalysed reaction is (6R)-5,10-methylene-5,6,7,8-tetrahydrofolate + NADP(+) = (6R)-5,10-methenyltetrahydrofolate + NADPH. It catalyses the reaction (6R)-5,10-methenyltetrahydrofolate + H2O = (6R)-10-formyltetrahydrofolate + H(+). Its pathway is one-carbon metabolism; tetrahydrofolate interconversion. In terms of biological role, catalyzes the oxidation of 5,10-methylenetetrahydrofolate to 5,10-methenyltetrahydrofolate and then the hydrolysis of 5,10-methenyltetrahydrofolate to 10-formyltetrahydrofolate. The protein is Bifunctional protein FolD of Micrococcus luteus (strain ATCC 4698 / DSM 20030 / JCM 1464 / CCM 169 / CCUG 5858 / IAM 1056 / NBRC 3333 / NCIMB 9278 / NCTC 2665 / VKM Ac-2230) (Micrococcus lysodeikticus).